The chain runs to 202 residues: Small ribosomal subunit protein uS4 (202 aa).

Basic residues predominate over residues Met1 to Arg13. A disordered region spans residues Met1 to Arg42. Residues Asn90–Asn152 form the S4 RNA-binding domain.

The protein belongs to the universal ribosomal protein uS4 family. In terms of assembly, part of the 30S ribosomal subunit. Contacts protein S5. The interaction surface between S4 and S5 is involved in control of translational fidelity.

Its function is as follows. One of the primary rRNA binding proteins, it binds directly to 16S rRNA where it nucleates assembly of the body of the 30S subunit. With S5 and S12 plays an important role in translational accuracy. In Prochlorococcus marinus subsp. pastoris (strain CCMP1986 / NIES-2087 / MED4), this protein is Small ribosomal subunit protein uS4.